The following is an 87-amino-acid chain: Small ribosomal subunit protein bS18 (87 aa).

It belongs to the bacterial ribosomal protein bS18 family. Part of the 30S ribosomal subunit. Forms a tight heterodimer with protein bS6.

Binds as a heterodimer with protein bS6 to the central domain of the 16S rRNA, where it helps stabilize the platform of the 30S subunit. In Sulfurovum sp. (strain NBC37-1), this protein is Small ribosomal subunit protein bS18.